The chain runs to 803 residues: E3 ubiquitin-protein ligase UHRF2 (803 aa).

Residues 1–78 enclose the Ubiquitin-like domain; the sequence is MWIQVRTIDG…IQLLVRPDSS (78 aa). Composition is skewed to polar residues over residues 79–96, 106–115, 167–181, and 189–200; these read LPST…SSHN, GGSSSQPSTS, KNGS…NVNH, and KLDNVPSTSNSD. Disordered stretches follow at residues 79–115 and 154–200; these read LPST…PSTS and RASD…SNSD. Positions 118 to 312 are required for interaction with histone H3; the sequence is TCLIDPGFGL…VDEIFKIEKP (195 aa). The tract at residues 195–289 is interaction with PCNP; that stretch reads STSNSDSVAA…KEVRVKVFLG (95 aa). The PHD-type zinc finger occupies 340 to 396; it reads DKTCHMCSCHKCGEKRDPNMQLLCDECNMAYHIYCLSPPLDKVPEEEYWYCPSCKTD. Residues 415–645 are methyl-CpG binding and interaction with HDAC1; the sequence is KMPSASTESR…LQYPAGYPSE (231 aa). In terms of domain architecture, YDG spans 449–613; that stretch reads GPIPGIPVGS…FLVWRYLLRR (165 aa). The tract at residues 643–676 is disordered; the sequence is PSEKEGKKTKGQSKKQGSEATKRPASDDECPGDS. A compositionally biased stretch (basic and acidic residues) spans 658-668; the sequence is QGSEATKRPAS. The residue at position 668 (Ser668) is a Phosphoserine. An RING-type zinc finger spans residues 734–773; it reads CVCCQELVYQPVTTECFHNVCKDCLQRSFKAQVFSCPACR.

In terms of assembly, homodimer; disulfide-linked. Binds methylated CpG containing oligonucleotides. Interacts with H3; the interaction has a preference for the 'Lys-9' trimethylated form of H3 (H3K9me3). Interacts with PCNP. Interacts with HDAC1. Interacts directly with CCNE1; the interaction ubiquitinates CCNE1 and appears independent of CCNE1 phosphorylation. Interacts with CCND1; the interaction ubiquitinates CCND1 and appears independent of CCND1 phosphorylation. Interacts with p53/TP53 and RB1. Interacts with UBE2I. Interacts with ZNF618. Interacts with UHRF1. Interacts with FANCD2. Interacts with ATR. Interacts with PCNA. Post-translationally, may be autoubiquitinated; which may lead to proteasomal degradation. Phosphorylated. Phosphorylation may be mediated by CDK2. In terms of processing, autosumoylated. Mostly detected in several tissues, including the thymus, spleen, lung, adrenal gland, and ovary. In addition, found in several tissues in the brain (cerebellum, hippocampus, and cerebral cortex).

Its subcellular location is the nucleus. The protein resides in the chromosome. The catalysed reaction is S-ubiquitinyl-[E2 ubiquitin-conjugating enzyme]-L-cysteine + [acceptor protein]-L-lysine = [E2 ubiquitin-conjugating enzyme]-L-cysteine + N(6)-ubiquitinyl-[acceptor protein]-L-lysine.. It functions in the pathway protein modification; protein ubiquitination. With respect to regulation, E3 ligase activity is robustly activated by 5-hydroxy-methylcytosine. E3 ubiquitin ligase that plays important roles in DNA methylation, histone modifications, cell cycle and DNA repair. Acts as a specific reader for 5-hydroxymethylcytosine (5hmC) and thereby recruits various substrates to these sites to ubiquitinate them. This activity also allows the maintenance of 5mC levels at specific genomic loci and regulates neuron-related gene expression. Participates in cell cycle regulation by ubiquitinating cyclins CCND1 and CCNE1 and thus inducing G1 arrest. Also ubiquitinates PCNP leading to its degradation by the proteasome. Plays an active role in DNA damage repair by ubiquitinating p21/CDKN1A leading to its proteasomal degradation. Also promotes DNA repair by acting as an interstrand cross-links (ICLs) sensor. Mechanistically, cooperates with UHRF1 to ensure recruitment of FANCD2 to ICLs, leading to FANCD2 monoubiquitination and subsequent activation. Contributes to UV-induced DNA damage response by physically interacting with ATR in response to irradiation, thereby promoting ATR activation. This Mus musculus (Mouse) protein is E3 ubiquitin-protein ligase UHRF2 (Uhrf2).